Reading from the N-terminus, the 71-residue chain is Cytotoxic linear peptide IsCT2 (71 aa).

Positions 1 to 23 (MKTQFAILLVALVLFQMFAQSEA) are cleaved as a signal peptide. The residue at position 36 (Phe-36) is a Phenylalanine amide. Positions 40–71 (ALNNDLDLDGLDELFDGEISQADVDFLKELMR) are excised as a propeptide.

It belongs to the non-disulfide-bridged peptide (NDBP) superfamily. Short antimicrobial peptide (group 4) family. Post-translationally, isCT2F is an enzymatic proteolytic cleavage product of IsCT2 by the proteases present in the venom. In terms of tissue distribution, expressed by the venom gland.

The protein resides in the secreted. The protein localises to the target cell membrane. Its function is as follows. IsCT2 shows weak hemolytic activity and antibacterial activity against both Gram-positive and Gram-negative bacteria probably by forming pores in the cell membrane. IsCT2 adopts an amphipathic alpha-helical structure. In terms of biological role, isCT2f shows neither hemolytic, nor antibacterial activities, surely due to the fact that it cannot apply amphipathic alpha-helical structure. This Opisthacanthus madagascariensis (Scorpion) protein is Cytotoxic linear peptide IsCT2.